A 174-amino-acid chain; its full sequence is Alpha-crystallin B chain (174 aa).

Met1 carries the post-translational modification N-acetylmethionine. In terms of domain architecture, sHSP spans 55–163; the sequence is RMPSWLETGL…PERSIPITRE (109 aa). Zn(2+)-binding residues include His82, His103, Glu105, and His110. The disordered stretch occupies residues 148 to 174; sequence RKQSDVPERSIPITREEKPAIAGAQRK. A compositionally biased stretch (basic and acidic residues) spans 149-166; that stretch reads KQSDVPERSIPITREEKP.

Belongs to the small heat shock protein (HSP20) family. In terms of assembly, heteromer composed of three CRYAA and one CRYAB subunits. Aggregates with homologous proteins, including the small heat shock protein HSPB1, to form large heteromeric complexes. Inter-subunit bridging via zinc ions enhances stability, which is crucial as there is no protein turn over in the lens. Lens as well as other tissues.

In terms of biological role, may contribute to the transparency and refractive index of the lens. The polypeptide is Alpha-crystallin B chain (CRYAB) (Anas platyrhynchos (Mallard)).